We begin with the raw amino-acid sequence, 202 residues long: GTP cyclohydrolase 1 (202 aa).

Residues C90, H93, and C163 each contribute to the Zn(2+) site.

Belongs to the GTP cyclohydrolase I family. Homomer.

It carries out the reaction GTP + H2O = 7,8-dihydroneopterin 3'-triphosphate + formate + H(+). The protein operates within cofactor biosynthesis; 7,8-dihydroneopterin triphosphate biosynthesis; 7,8-dihydroneopterin triphosphate from GTP: step 1/1. This chain is GTP cyclohydrolase 1, found in Mycobacterium ulcerans (strain Agy99).